The chain runs to 137 residues: Basic phospholipase A2 3 (137 aa).

The first 11 residues, Leu-1–Ala-11, serve as a signal peptide directing secretion. The propeptide occupies Ala-12–Leu-19. 7 disulfide bridges follow: Cys-30–Cys-89, Cys-44–Cys-136, Cys-46–Cys-62, Cys-61–Cys-117, Cys-68–Cys-110, Cys-78–Cys-103, and Cys-96–Cys-108. Residues Tyr-45, Gly-47, and Gly-49 each coordinate Ca(2+). The active site involves His-65. Asp-66 contacts Ca(2+). Asp-111 is a catalytic residue.

It belongs to the phospholipase A2 family. Group I subfamily. D49 sub-subfamily. Monomer, or homotrimer. Was firstly described as a trimer, but has been reinterpreted with the possibility of being a monomer. It depends on Ca(2+) as a cofactor. In terms of tissue distribution, expressed by the venom gland.

The protein resides in the secreted. The catalysed reaction is a 1,2-diacyl-sn-glycero-3-phosphocholine + H2O = a 1-acyl-sn-glycero-3-phosphocholine + a fatty acid + H(+). In terms of biological role, snake venom phospholipase A2 (PLA2) that shows anticoagulant and neurotoxic activities. PLA2 catalyzes the calcium-dependent hydrolysis of the 2-acyl groups in 3-sn-phosphoglycerides. The protein is Basic phospholipase A2 3 of Bungarus caeruleus (Indian krait).